A 737-amino-acid polypeptide reads, in one-letter code: 1,4-alpha-glucan branching enzyme GlgB (737 aa).

Asp399 serves as the catalytic Nucleophile. Glu452 serves as the catalytic Proton donor.

It belongs to the glycosyl hydrolase 13 family. GlgB subfamily. Monomer.

It catalyses the reaction Transfers a segment of a (1-&gt;4)-alpha-D-glucan chain to a primary hydroxy group in a similar glucan chain.. It participates in glycan biosynthesis; glycogen biosynthesis. In terms of biological role, catalyzes the formation of the alpha-1,6-glucosidic linkages in glycogen by scission of a 1,4-alpha-linked oligosaccharide from growing alpha-1,4-glucan chains and the subsequent attachment of the oligosaccharide to the alpha-1,6 position. This Chlamydia muridarum (strain MoPn / Nigg) protein is 1,4-alpha-glucan branching enzyme GlgB.